The primary structure comprises 78 residues: Sec-independent protein translocase protein TatA (78 aa).

A helical membrane pass occupies residues 4 to 21; sequence SFQHILILLVVVLLLFGR. The segment at 49-78 is disordered; that stretch reads TAKSDSIKTIDNTGKPTNVQANPQRQDSTV. Residues 57–78 show a composition bias toward polar residues; it reads TIDNTGKPTNVQANPQRQDSTV.

This sequence belongs to the TatA/E family. In terms of assembly, the Tat system comprises two distinct complexes: a TatABC complex, containing multiple copies of TatA, TatB and TatC subunits, and a separate TatA complex, containing only TatA subunits. Substrates initially bind to the TatABC complex, which probably triggers association of the separate TatA complex to form the active translocon.

It is found in the cell inner membrane. Its function is as follows. Part of the twin-arginine translocation (Tat) system that transports large folded proteins containing a characteristic twin-arginine motif in their signal peptide across membranes. TatA could form the protein-conducting channel of the Tat system. The sequence is that of Sec-independent protein translocase protein TatA from Afipia carboxidovorans (strain ATCC 49405 / DSM 1227 / KCTC 32145 / OM5) (Oligotropha carboxidovorans).